A 107-amino-acid polypeptide reads, in one-letter code: Heme-degrading monooxygenase (107 aa).

The region spanning 2–93 (VIVANKTLIR…DYILGNEIEF (92 aa)) is the ABM domain. Position 6 (asparagine 6) interacts with Fe cation. Position 76 (histidine 76) interacts with heme.

Belongs to the antibiotic biosynthesis monooxygenase family. Heme-degrading monooxygenase IsdG subfamily. Homodimer.

It localises to the cytoplasm. It carries out the reaction heme b + 3 reduced [NADPH--hemoprotein reductase] + 3 O2 = biliverdin IXalpha + CO + Fe(2+) + 3 oxidized [NADPH--hemoprotein reductase] + 3 H2O + H(+). Its function is as follows. Allows bacterial pathogens to use the host heme as an iron source. Catalyzes the oxidative degradation of the heme macrocyclic porphyrin ring to the biliverdin in the presence of a suitable electron donor such as ascorbate or NADPH--cytochrome P450 reductase, with subsequent release of free iron. This is Heme-degrading monooxygenase from Shouchella clausii (strain KSM-K16) (Alkalihalobacillus clausii).